The following is a 227-amino-acid chain: MTYPVIRELPPEMRPRERMLKEGAGSLTEIDLLAIMLRTGTSKVSVLELAAELFSHFKDLRALSQATIEELSQIKGVGPVKAVQVKAALELGRRLAAMPAETRVIIRCPEDVCGLVMEDLRDLDREHFLALLLNTKNQVLARETISIGTLNSSVVHPRELFKVAIRRSAASMILVHNHPSGDPTPSREDIVLTKRLIEAGEIIGIDVLDHIIIGDNKFTSLKSKGLI.

The 123-residue stretch at 105–227 (IIRCPEDVCG…FTSLKSKGLI (123 aa)) folds into the MPN domain. Zn(2+) is bound by residues histidine 176, histidine 178, and aspartate 189. A JAMM motif motif is present at residues 176-189 (HNHPSGDPTPSRED).

It belongs to the UPF0758 family.

The chain is UPF0758 protein Dred_2549 from Desulforamulus reducens (strain ATCC BAA-1160 / DSM 100696 / MI-1) (Desulfotomaculum reducens).